The following is a 1169-amino-acid chain: Protein MBD-R2 (1169 aa).

The THAP-type zinc finger occupies 5-59 (CCVANCPSTSRLLEHNGVTYHSFPLDPIIRAIWIKNSRISLERQITKSVLVCSRH). 3 disordered regions span residues 99–122 (RALQ…STND), 140–211 (SAER…KYSN), and 347–394 (AEEG…CAPQ). Over residues 107–122 (EGTTETPGNAQSSTND) the composition is skewed to polar residues. Positions 140–160 (SAERKATEEGKTGKAADDVKN) are enriched in basic and acidic residues. Low complexity predominate over residues 190-202 (PAPGSASSSNSPL). A compositionally biased stretch (polar residues) spans 353 to 363 (KSPTPVGTPVS). The region spanning 445 to 514 (KPTVIVQDWR…DVYDFSIHRR (70 aa)) is the MBD domain. Residues 527 to 565 (GYNPQPPPKPRPMDVSMNSTLDQSITSQHSLPSTPMPVK) are disordered. Positions 542-559 (SMNSTLDQSITSQHSLPS) are enriched in polar residues. Residues 640–665 (YVCPREDCAKTYRKEDFLLIHIRHYH) form a C2H2-type zinc finger. The segment at 714–890 (QDLQQSRSFK…INAALAPPPA (177 aa)) is disordered. The span at 726–742 (SVSATATSSTPSDITPT) shows a compositional bias: low complexity. Residues 774 to 784 (PTQSFNPSLSR) are compositionally biased toward polar residues. The segment covering 798–810 (SGSRKSNRQRSQR) has biased composition (basic residues). 2 stretches are compositionally biased toward polar residues: residues 853–862 (AATTPISSID) and 869–881 (SVST…QTDI).

In terms of assembly, component of the non-specific lethal (NLS) histone acetyltransferase complex at least composed of mof, nls1, dgt1/NSL2, Rcd1/NSL3, Rcd5/MCRS2, MBD-R2 and wds.

The protein resides in the nucleus. It localises to the chromosome. Functionally, component of the non-specific lethal (NLS) complex, a multiprotein complex that promotes expression of housekeeping genes on X chromosome and autosomes. This is Protein MBD-R2 from Drosophila melanogaster (Fruit fly).